The primary structure comprises 117 residues: 5-hydroxyisourate hydrolase (117 aa).

3 residues coordinate substrate: His7, Arg45, and Tyr114.

This sequence belongs to the transthyretin family. 5-hydroxyisourate hydrolase subfamily. Homotetramer.

It carries out the reaction 5-hydroxyisourate + H2O = 5-hydroxy-2-oxo-4-ureido-2,5-dihydro-1H-imidazole-5-carboxylate + H(+). Catalyzes the hydrolysis of 5-hydroxyisourate (HIU) to 2-oxo-4-hydroxy-4-carboxy-5-ureidoimidazoline (OHCU). The sequence is that of 5-hydroxyisourate hydrolase from Ralstonia nicotianae (strain ATCC BAA-1114 / GMI1000) (Ralstonia solanacearum).